A 211-amino-acid polypeptide reads, in one-letter code: Protoglabretal synthase MOI1 (211 aa).

The next 5 membrane-spanning stretches (helical) occupy residues 16–36, 50–70, 104–124, 135–155, and 179–199; these read ASLH…TWII, LICW…YYVF, VLGI…LAAY, IFQF…FLTA, and IWVI…HAIC. The 143-residue stretch at 46–188 folds into the EXPERA domain; the sequence is IERLLICWWA…IWVIVPMLIA (143 aa).

It belongs to the EBP family. In terms of tissue distribution, expressed in maturing fruits and in juice vesicles.

Its subcellular location is the membrane. It carries out the reaction 7,8-epoxymelianol = protoglabretal. It participates in secondary metabolite biosynthesis; terpenoid biosynthesis. Its function is as follows. Isomerase involved in the biosynthesis of glabretanes triterpene natural products such as glabretal, a component with in vitro antiproliferative properties on lymphocytes. Catalyzes the conversion of 7,8-epoxymelianol to protoglabretal via skeletal rearrangements. In Citrus sinensis (Sweet orange), this protein is Protoglabretal synthase MOI1.